Consider the following 50-residue polypeptide: Photosystem II reaction center protein M (50 aa).

The helical transmembrane segment at 7–27 (GFIISLLFVGIPTIFLVGLYI) threads the bilayer. The segment at 31–50 (DGEKSSFFSDSSKGKLGPKS) is disordered.

Belongs to the PsbM family. As to quaternary structure, PSII is composed of 1 copy each of membrane proteins PsbA, PsbB, PsbC, PsbD, PsbE, PsbF, PsbH, PsbI, PsbJ, PsbK, PsbL, PsbM, PsbT, PsbX, PsbY, Psb30/Ycf12, peripheral proteins PsbO, CyanoQ (PsbQ), PsbU, PsbV and a large number of cofactors. It forms dimeric complexes.

It is found in the cellular thylakoid membrane. Its function is as follows. One of the components of the core complex of photosystem II (PSII). PSII is a light-driven water:plastoquinone oxidoreductase that uses light energy to abstract electrons from H(2)O, generating O(2) and a proton gradient subsequently used for ATP formation. It consists of a core antenna complex that captures photons, and an electron transfer chain that converts photonic excitation into a charge separation. This subunit is found at the monomer-monomer interface. This is Photosystem II reaction center protein M from Prochlorococcus marinus (strain SARG / CCMP1375 / SS120).